The following is a 1405-amino-acid chain: DNA-directed RNA polymerase subunit beta' (1405 aa).

Cys65, Cys67, Cys80, and Cys83 together coordinate Zn(2+). 3 residues coordinate Mg(2+): Asp468, Asp470, and Asp472. Positions 811, 885, 892, and 895 each coordinate Zn(2+).

It belongs to the RNA polymerase beta' chain family. As to quaternary structure, the RNAP catalytic core consists of 2 alpha, 1 beta, 1 beta' and 1 omega subunit. When a sigma factor is associated with the core the holoenzyme is formed, which can initiate transcription. Mg(2+) serves as cofactor. It depends on Zn(2+) as a cofactor.

It catalyses the reaction RNA(n) + a ribonucleoside 5'-triphosphate = RNA(n+1) + diphosphate. Functionally, DNA-dependent RNA polymerase catalyzes the transcription of DNA into RNA using the four ribonucleoside triphosphates as substrates. This chain is DNA-directed RNA polymerase subunit beta', found in Azobacteroides pseudotrichonymphae genomovar. CFP2.